Reading from the N-terminus, the 464-residue chain is Probable glycosyltransferase Saci_1499 (464 aa).

The next 6 helical transmembrane spans lie at 6–26, 300–320, 337–357, 373–393, 416–436, and 439–459; these read IFLN…QIIL, LIIY…STLL, ALLF…SLAL, LTAF…KGLL, IIAI…LYIY, and YYVT…TMLL.

The protein belongs to the glycosyltransferase 2 family.

The protein localises to the cell membrane. Probably part of a 4-gene DNA damage response locus in which the upstream ups system, in combination with this downstream locus, functions in homologous recombination to rescue Sulfolobales from DNA-damaging threats. In Sulfolobus acidocaldarius (strain ATCC 33909 / DSM 639 / JCM 8929 / NBRC 15157 / NCIMB 11770), this protein is Probable glycosyltransferase Saci_1499.